The chain runs to 302 residues: Sulfate adenylyltransferase subunit 2 (302 aa).

This sequence belongs to the PAPS reductase family. CysD subfamily. As to quaternary structure, heterodimer composed of CysD, the smaller subunit, and CysN.

The catalysed reaction is sulfate + ATP + H(+) = adenosine 5'-phosphosulfate + diphosphate. It functions in the pathway sulfur metabolism; hydrogen sulfide biosynthesis; sulfite from sulfate: step 1/3. Its function is as follows. With CysN forms the ATP sulfurylase (ATPS) that catalyzes the adenylation of sulfate producing adenosine 5'-phosphosulfate (APS) and diphosphate, the first enzymatic step in sulfur assimilation pathway. APS synthesis involves the formation of a high-energy phosphoric-sulfuric acid anhydride bond driven by GTP hydrolysis by CysN coupled to ATP hydrolysis by CysD. This is Sulfate adenylyltransferase subunit 2 from Xanthomonas campestris pv. campestris (strain 8004).